The primary structure comprises 358 residues: Peptide chain release factor 1 (358 aa).

Q234 carries the post-translational modification N5-methylglutamine.

This sequence belongs to the prokaryotic/mitochondrial release factor family. In terms of processing, methylated by PrmC. Methylation increases the termination efficiency of RF1.

It is found in the cytoplasm. Its function is as follows. Peptide chain release factor 1 directs the termination of translation in response to the peptide chain termination codons UAG and UAA. The chain is Peptide chain release factor 1 from Akkermansia muciniphila (strain ATCC BAA-835 / DSM 22959 / JCM 33894 / BCRC 81048 / CCUG 64013 / CIP 107961 / Muc).